The chain runs to 221 residues: Glutathione S-transferase alpha-5 (221 aa).

One can recognise a GST N-terminal domain in the interval 3 to 83; that stretch reads GKPVLHYFDG…YIATKYNLYG (81 aa). Lys4 carries the post-translational modification N6-succinyllysine. Residues Tyr9, Arg45, 54–55, and 67–68 each bind glutathione; these read QV and QT. Positions 85–207 constitute a GST C-terminal domain; that stretch reads DMKERALIDM…LQPGSQRKPF (123 aa).

This sequence belongs to the GST superfamily. Alpha family. In terms of assembly, heterodimer of YC1 and YC2. In terms of tissue distribution, liver, nasal mucosa and epididymis.

The protein localises to the cytoplasm. It catalyses the reaction RX + glutathione = an S-substituted glutathione + a halide anion + H(+). Functionally, conjugation of reduced glutathione to a wide number of exogenous and endogenous hydrophobic electrophiles. Has substantial activity toward aflatoxin B1-8,9-epoxide. The protein is Glutathione S-transferase alpha-5 (Gsta5) of Rattus norvegicus (Rat).